Reading from the N-terminus, the 398-residue chain is MKNFNLLAVSSILLVDLFRTQWGHNVHFSKAINLNGVSFNNVDASSLGAAQVRQSASRGRGLGENPKNEEGADKPKKKDEKQVEPKKPRENKLKQPAGNNAAAGEAGNNAAAGEAGNNAAAGEAGNNAAAGEAGNNAAAGEAGNNAAAGEAGNNAAGGAAGNNAAGGEAGNNAAGGAAGNNAAAGEAGNNAAGGEAGNNAAAGEAGNNAAGGAAGNNAAAGEAGNNAAAGAAGNNAAAGAAGNNAAAGEAGAGGAGRAGNNAAAGEAGAGGAGRAGNNAAAGEAGAGGAGGNAGNKKAGDAGQGQNNGGANVPNVKLVKEYLDKIRSTIGVEWSPCSVTCGKGVRMRRKVNAANKKPEELDANDLETEVCTMDKCAGIFNVVSNSLGLVILLVLALFN.

A signal peptide spans 1–23 (MKNFNLLAVSSILLVDLFRTQWG). Residues 50–110 (AQVRQSASRG…AAAGEAGNNA (61 aa)) form a disordered region. Over residues 66 to 93 (PKNEEGADKPKKKDEKQVEPKKPRENKL) the composition is skewed to basic and acidic residues. The interval 81-89 (KQVEPKKPR) is required for the binding to heparan sulfate proteoglycans (HSPGs) on the surface of host hepatocytes. The tract at residues 92 to 96 (KLKQP) is region I; contains the proteolytic cleavage site. Tandem repeats lie at residues 97–105 (AGNNAAAGE), 106–114 (AGNNAAAGE), 115–123 (AGNNAAAGE), 124–132 (AGNNAAAGE), 133–141 (AGNNAAAGE), 142–150 (AGNNAAAGE), 151–159 (AGNNAAGGA), 160–168 (AGNNAAGGE), 169–177 (AGNNAAGGA), 178–186 (AGNNAAAGE), 187–195 (AGNNAAGGE), 196–204 (AGNNAAAGE), 205–213 (AGNNAAGGA), 214–222 (AGNNAAAGE), 223–231 (AGNNAAAGA), 232–240 (AGNNAAAGA), 241–257 (AGNN…GAGR), 258–274 (AGNN…GAGR), and 275–291 (AGNN…GAGG). Over residues 97-110 (AGNNAAAGEAGNNA) the composition is skewed to low complexity. A 16 X 9 AA tandem repeats of A-G-N-N-A-A-[AG]-G-[EA] region spans residues 97–240 (AGNNAAAGEA…AAGNNAAAGA (144 aa)). Residues 241–291 (AGNNAAAGEAGAGGAGRAGNNAAAGEAGAGGAGRAGNNAAAGEAGAGGAGG) are 3 X 17 AA tandem repeats of A-G-N-N-A-A-A-G-E-A-G-A-G-G-A-G-[RG]. The interval 248 to 310 (GEAGAGGAGR…AGQGQNNGGA (63 aa)) is disordered. Positions 284 to 293 (AGAGGAGGNA) are enriched in gly residues. One can recognise a TSP type-1 domain in the interval 324–376 (KIRSTIGVEWSPCSVTCGKGVRMRRKVNAANKKPEELDANDLETEVCTMDKCA). 2 disulfide bridges follow: C336–C370 and C340–C375. A glycan (O-linked (Fuc) threonine) is linked at T339. A lipid anchor (GPI-anchor amidated cysteine) is attached at C375. The propeptide at 376 to 398 (AGIFNVVSNSLGLVILLVLALFN) is removed in mature form.

Belongs to the plasmodium circumsporozoite protein family. In terms of processing, during host cell invasion, proteolytically cleaved at the cell membrane in the region I by a papain-like cysteine protease of parasite origin. Cleavage is triggered by the sporozoite contact with highly sulfated heparan sulfate proteoglycans (HSPGs) present on the host hepatocyte cell surface. Cleavage exposes the TSP type-1 (TSR) domain and is required for productive invasion of host hepatocytes but not for adhesion to the host cell membrane. Cleavage is dispensable for sporozoite development in the oocyst, motility and for traversal of host and vector cells. O-glycosylated; maybe by POFUT2.

The protein resides in the cell membrane. It is found in the cytoplasm. In terms of biological role, essential sporozoite protein. In the mosquito vector, required for sporozoite development in the oocyst, migration through the vector hemolymph and entry into the vector salivary glands. In the vertebrate host, required for sporozoite migration through the host dermis and infection of host hepatocytes. Binds to highly sulfated heparan sulfate proteoglycans (HSPGs) on the surface of host hepatocytes. Its function is as follows. In the vertebrate host, binds to highly sulfated heparan sulfate proteoglycans (HSPGs) on the surface of host hepatocytes and is required for sporozoite invasion of the host hepatocytes. In Plasmodium cynomolgi (strain Ceylon), this protein is Circumsporozoite protein.